Consider the following 300-residue polypeptide: 33 kDa chaperonin (300 aa).

Disulfide bonds link Cys-235-Cys-237 and Cys-269-Cys-272.

Belongs to the HSP33 family. In terms of processing, under oxidizing conditions two disulfide bonds are formed involving the reactive cysteines. Under reducing conditions zinc is bound to the reactive cysteines and the protein is inactive.

The protein localises to the cytoplasm. Functionally, redox regulated molecular chaperone. Protects both thermally unfolding and oxidatively damaged proteins from irreversible aggregation. Plays an important role in the bacterial defense system toward oxidative stress. In Pseudomonas syringae pv. syringae (strain B728a), this protein is 33 kDa chaperonin.